The chain runs to 394 residues: Nuclear hormone receptor family member nhr-103 (394 aa).

The segment at residues 8 to 83 (SGPCEICGQK…VGMDSKKFQT (76 aa)) is a DNA-binding region (nuclear receptor). Residues 11 to 31 (CEICGQKTSGRHFGVLSCRSC) form an NR C4-type zinc finger. The NR C4-type; degenerate zinc-finger motif lies at 47-66 (QCVKGTCKIFEDGKFNCKQC). Residues 126-394 (YLVDMAKNLL…FSHPEMFETT (269 aa)) enclose the NR LBD domain.

It belongs to the nuclear hormone receptor family.

It is found in the nucleus. In terms of biological role, orphan nuclear receptor. This chain is Nuclear hormone receptor family member nhr-103 (nhr-103), found in Caenorhabditis elegans.